The primary structure comprises 394 residues: Probable aspartate/prephenate aminotransferase (394 aa).

L-aspartate is bound by residues glycine 40, tryptophan 126, and asparagine 176. Lysine 239 bears the N6-(pyridoxal phosphate)lysine mark. Arginine 370 provides a ligand contact to L-aspartate.

Belongs to the class-I pyridoxal-phosphate-dependent aminotransferase family. Homodimer. Pyridoxal 5'-phosphate serves as cofactor.

The protein resides in the cytoplasm. The catalysed reaction is L-aspartate + 2-oxoglutarate = oxaloacetate + L-glutamate. It carries out the reaction L-arogenate + oxaloacetate = prephenate + L-aspartate. Catalyzes the reversible conversion of aspartate and 2-oxoglutarate to glutamate and oxaloacetate. Can also transaminate prephenate in the presence of aspartate. This chain is Probable aspartate/prephenate aminotransferase (aspC), found in Aquifex aeolicus (strain VF5).